The chain runs to 123 residues: Ribosome-binding factor A (123 aa).

It belongs to the RbfA family. Monomer. Binds 30S ribosomal subunits, but not 50S ribosomal subunits or 70S ribosomes.

The protein localises to the cytoplasm. In terms of biological role, one of several proteins that assist in the late maturation steps of the functional core of the 30S ribosomal subunit. Associates with free 30S ribosomal subunits (but not with 30S subunits that are part of 70S ribosomes or polysomes). Required for efficient processing of 16S rRNA. May interact with the 5'-terminal helix region of 16S rRNA. The protein is Ribosome-binding factor A of Magnetococcus marinus (strain ATCC BAA-1437 / JCM 17883 / MC-1).